The chain runs to 336 residues: Foldase protein PrsA (336 aa).

The first 22 residues, 1 to 22, serve as a signal peptide directing secretion; sequence MKSAKKLLSVLCLGIFILTFTA. Residue C23 is the site of N-palmitoyl cysteine attachment. C23 carries S-diacylglycerol cysteine lipidation. Positions 194-286 constitute a PpiC domain; that stretch reads PNTMNVSHIL…FGYHIIKINS (93 aa).

This sequence belongs to the PrsA family.

The protein resides in the cell membrane. It carries out the reaction [protein]-peptidylproline (omega=180) = [protein]-peptidylproline (omega=0). Its function is as follows. Plays a major role in protein secretion by helping the post-translocational extracellular folding of several secreted proteins. The sequence is that of Foldase protein PrsA from Clostridium botulinum (strain Kyoto / Type A2).